The primary structure comprises 415 residues: Gamma-glutamyl phosphate reductase (415 aa).

The protein belongs to the gamma-glutamyl phosphate reductase family.

The protein localises to the cytoplasm. It catalyses the reaction L-glutamate 5-semialdehyde + phosphate + NADP(+) = L-glutamyl 5-phosphate + NADPH + H(+). It functions in the pathway amino-acid biosynthesis; L-proline biosynthesis; L-glutamate 5-semialdehyde from L-glutamate: step 2/2. Its function is as follows. Catalyzes the NADPH-dependent reduction of L-glutamate 5-phosphate into L-glutamate 5-semialdehyde and phosphate. The product spontaneously undergoes cyclization to form 1-pyrroline-5-carboxylate. The sequence is that of Gamma-glutamyl phosphate reductase from Bacillus cereus (strain ATCC 10987 / NRS 248).